The sequence spans 399 residues: Elongation factor Tu (399 aa).

A tr-type G domain is found at 10-209 (NPHVNIGTIG…EVDSYIPTPE (200 aa)). The G1 stretch occupies residues 19–26 (GHVYHGKT). 19-26 (GHVYHGKT) provides a ligand contact to GTP. Thr26 serves as a coordination point for Mg(2+). Residues 60–64 (GITIA) are G2. The G3 stretch occupies residues 81 to 84 (DCPG). Residues 81–85 (DCPGH) and 136–139 (NKQD) each bind GTP. The G4 stretch occupies residues 136-139 (NKQD). The tract at residues 174–176 (SAL) is G5.

Belongs to the TRAFAC class translation factor GTPase superfamily. Classic translation factor GTPase family. EF-Tu/EF-1A subfamily. As to quaternary structure, monomer.

It is found in the cytoplasm. It catalyses the reaction GTP + H2O = GDP + phosphate + H(+). In terms of biological role, GTP hydrolase that promotes the GTP-dependent binding of aminoacyl-tRNA to the A-site of ribosomes during protein biosynthesis. The sequence is that of Elongation factor Tu from Helicobacter pylori (strain J99 / ATCC 700824) (Campylobacter pylori J99).